The chain runs to 307 residues: Sesquiterpene synthase-like protein Agr10 (307 aa).

The tract at residues 287–307 (GRYFGDRGPENQSDIPTSSNR) is disordered. A compositionally biased stretch (polar residues) spans 296-307 (ENQSDIPTSSNR).

It belongs to the terpene synthase family.

This Cyclocybe aegerita (Black poplar mushroom) protein is Sesquiterpene synthase-like protein Agr10.